A 194-amino-acid chain; its full sequence is MGKYMRKAKVVVSGEVVAAAVMELAAAPLGVRTRARSLALQKRQGGEYLELRSRRLEKLPPPPPPPPRRRATAAAATADATAAESAEAEVSFGGENVLELEAMERNTRETTPCSLIRDPDTISTPGSTTRRSHSSSHCKVQTPVRHNIIPASAELEAFFAAEEQRQRQAFIDKYNFDPVNDCPLPGRFEWVKLD.

Residues Leu49 to Lys58 are compositionally biased toward basic and acidic residues. Disordered stretches follow at residues Leu49 to Arg70 and Thr107 to Lys139.

This sequence belongs to the CDI family. ICK/KRP subfamily.

In Oryza sativa subsp. japonica (Rice), this protein is Cyclin-dependent kinase inhibitor 4 (KRP4).